Here is a 255-residue protein sequence, read N- to C-terminus: Imidazole glycerol phosphate synthase subunit HisF (255 aa).

Catalysis depends on residues Asp11 and Asp130.

It belongs to the HisA/HisF family. As to quaternary structure, heterodimer of HisH and HisF.

Its subcellular location is the cytoplasm. It catalyses the reaction 5-[(5-phospho-1-deoxy-D-ribulos-1-ylimino)methylamino]-1-(5-phospho-beta-D-ribosyl)imidazole-4-carboxamide + L-glutamine = D-erythro-1-(imidazol-4-yl)glycerol 3-phosphate + 5-amino-1-(5-phospho-beta-D-ribosyl)imidazole-4-carboxamide + L-glutamate + H(+). Its pathway is amino-acid biosynthesis; L-histidine biosynthesis; L-histidine from 5-phospho-alpha-D-ribose 1-diphosphate: step 5/9. In terms of biological role, IGPS catalyzes the conversion of PRFAR and glutamine to IGP, AICAR and glutamate. The HisF subunit catalyzes the cyclization activity that produces IGP and AICAR from PRFAR using the ammonia provided by the HisH subunit. The polypeptide is Imidazole glycerol phosphate synthase subunit HisF (Syntrophotalea carbinolica (strain DSM 2380 / NBRC 103641 / GraBd1) (Pelobacter carbinolicus)).